The following is a 313-amino-acid chain: Elongation factor Ts (313 aa).

Residues 82–85 are involved in Mg(2+) ion dislocation from EF-Tu; that stretch reads TDFV.

It belongs to the EF-Ts family.

The protein resides in the cytoplasm. Functionally, associates with the EF-Tu.GDP complex and induces the exchange of GDP to GTP. It remains bound to the aminoacyl-tRNA.EF-Tu.GTP complex up to the GTP hydrolysis stage on the ribosome. The chain is Elongation factor Ts from Nostoc sp. (strain PCC 7120 / SAG 25.82 / UTEX 2576).